We begin with the raw amino-acid sequence, 260 residues long: Putative nudix hydrolase 6 (260 aa).

The 145-residue stretch at 113-257 folds into the Nudix hydrolase domain; that stretch reads PNHAADPIVS…SHFIDLLKES (145 aa). A Nudix box motif is present at residues 148–170; it reads GMVDAGEHVSQTLRREFAEEAMH. Residues Glu-163 and Glu-167 each contribute to the Mg(2+) site.

It belongs to the Nudix hydrolase family. It depends on Mg(2+) as a cofactor. The cofactor is Mn(2+).

Its function is as follows. Probably mediates the hydrolysis of some nucleoside diphosphate derivatives. This Caenorhabditis elegans protein is Putative nudix hydrolase 6 (ndx-6).